A 511-amino-acid chain; its full sequence is MEVGTVVQEEMKFRGSEFAVKVEMAERLLIVEISDVVTADQWRGEFGPAYIEDLTRKTGNFKQFPVFCSMLESAVHKSSDSVTLDLLTYSDLELLRNRKAGVVGRPRAQPQSPALSAKRYLILIYTVEFDRIHYPLPLPYLGKPDPAELQKEIRALRSELKTLGLRGDHKVSDQETRKLRTELALVRDEKEALAKALDRLQMVGSGSAPGARGLREAVHSLEEQLLKERAKSQRSAIKKSQEQRLLVEQLEELRASERALRIRVKSLTTELALLRRGRATPVLSDRGGLRGDGVVHRSLSRERSLTRVGIRARSGSRERIEDRGRRSEERVRRADSSGSRNCITRPSPSPTGSRVPRFDPTAYIQDRQRRQKEAELKSQRKIRRDMLASPSLMERGRSRSREPVPQLMRAGSAGRGRSVSVESRRSRCSSEGSVAEFEELAKPLNSRGRKLMSNGPAVSRGRHINKKPMCSTPAQRMRAGDTSMDTGADLSEIDARLQALQDYMRDLDTGH.

The head domain stretch occupies residues 1–144 (MEVGTVVQEE…PLPLPYLGKP (144 aa)). The stretch at 147 to 272 (AELQKEIRAL…RVKSLTTELA (126 aa)) forms a coiled coil. Disordered stretches follow at residues 306–403 (TRVG…SREP) and 447–486 (RGRK…SMDT). A compositionally biased stretch (basic and acidic residues) spans 315–335 (GSRERIEDRGRRSEERVRRAD). The segment covering 338–352 (GSRNCITRPSPSPTG) has biased composition (polar residues). Over residues 366-378 (DRQRRQKEAELKS) the composition is skewed to basic and acidic residues.

This sequence belongs to the CCDC61 family. Forms homodimers (via head domain).

It is found in the cytoplasm. It localises to the cytoskeleton. The protein resides in the microtubule organizing center. The protein localises to the centrosome. Its subcellular location is the centriolar satellite. It is found in the cilium basal body. Microtubule-binding centrosomal protein required for centriole cohesion, independently of the centrosome-associated protein/CEP250 and rootletin/CROCC linker. In interphase, required for anchoring microtubule at the mother centriole subdistal appendages and for centrosome positioning. During mitosis, may be involved in spindle assembly and chromatin alignment by regulating the organization of spindle microtubules into a symmetrical structure. Plays a non-essential role in ciliogenesis. This Danio rerio (Zebrafish) protein is Centrosomal protein CCDC61.